A 394-amino-acid chain; its full sequence is Major outer membrane porin, serovar B (394 aa).

An N-terminal signal peptide occupies residues 1 to 22 (MKKLLKSVLVFAALSSASSLQA).

This sequence belongs to the chlamydial porin (CP) (TC 1.B.2) family. Part of a disulfide cross-linked outer membrane complex (COMC) composed of the major outer membrane porin (MOMP), the small cysteine-rich protein (OmcA) and the large cysteine-rich periplasmic protein (OmcB).

It is found in the cell outer membrane. Functionally, in elementary bodies (EBs, the infectious stage, which is able to survive outside the host cell) provides the structural integrity of the outer envelope through disulfide cross-links with the small cysteine-rich protein and the large cysteine-rich periplasmic protein. It has been described in publications as the Sarkosyl-insoluble COMC (Chlamydia outer membrane complex), and serves as the functional equivalent of peptidoglycan. In terms of biological role, permits diffusion of specific solutes through the outer membrane. The protein is Major outer membrane porin, serovar B (ompA) of Chlamydia trachomatis.